The chain runs to 214 residues: MSRLIIVFIVVTMICSATALPSKKIIDEDEEDEKRSADVAGAVIDGASLSFDILKTVLEALGNVKRKIAVGVDNESGKTWTALNTYFRSGTSDIVLPHKVPHGKALLYNGQKDRGPVATGAVGVLAYLMSDGNTLAVLFSVPYDYNWYSNWWNVRIYKGKRRADQRMYEELYYNLSPFRGDNGWHTRNLGYGLKSRGFMNSSGHAILEIHVSKA.

Residues 1 to 19 (MSRLIIVFIVVTMICSATA) form the signal peptide. Positions 20–35 (LPSKKIIDEDEEDEKR) are excised as a propeptide. The segment at 38–47 (DVAGAVIDGA) is plays an important role in the hemolytic activity. The N-terminal region stretch occupies residues 46 to 65 (GASLSFDILKTVLEALGNVK). Phosphocholine-binding residues include S89, V122, S140, P142, Y168, Y172, and Y173. The segment at 140–155 (SVPYDYNWYSNWWNVR) is trp-rich region, which is important for the binding to lipid membrane. The Cell attachment site, crucial for protein stability motif lies at 179–181 (RGD).

It belongs to the actinoporin family. Sea anemone subfamily. In terms of assembly, octamer or nonamer in membranes. Monomer in the soluble state.

It localises to the secreted. The protein localises to the nematocyst. Its subcellular location is the target cell membrane. Pore-forming protein that forms cations-selective hydrophilic pores of around 1 nm and causes cardiac stimulation and cytolysis. Pore formation is a multi-step process that involves specific recognition of membrane sphingomyelin (but neither cholesterol nor phosphatidylcholine) using aromatic rich region and adjacent phosphocholine (POC) binding site, firm binding to the membrane (mainly driven by hydrophobic interactions) accompanied by the transfer of the N-terminal region to the lipid-water interface and finally pore formation after oligomerization of monomers. Cytolytic effects include red blood cells hemolysis, platelet aggregation and lysis, cytotoxic and cytostatic effects on fibroblasts. Lethality in mammals has been ascribed to severe vasospasm of coronary vessels, cardiac arrhythmia, and inotropic effects. This chain is DELTA-actitoxin-Aeq1a, found in Actinia equina (Beadlet anemone).